A 581-amino-acid chain; its full sequence is Frizzled-10 (581 aa).

A signal peptide spans 1-20 (MQRPGPRLWLVLQVMGSCAA). Residues 21-225 (ISSMDMERPG…DVYWSREDKR (205 aa)) lie on the Extracellular side of the membrane. Positions 29–150 (PGDGKCQPIE…NDPNYLCMEA (122 aa)) constitute an FZ domain. 5 disulfide bridges follow: Cys-34–Cys-95, Cys-42–Cys-88, Cys-79–Cys-117, Cys-106–Cys-147, and Cys-110–Cys-134. The N-linked (GlcNAc...) asparagine glycan is linked to Asn-48. N-linked (GlcNAc...) asparagine glycosylation occurs at Asn-153. The helical transmembrane segment at 226 to 246 (FAVVWLAIWAVLCFFSSAFTV) threads the bilayer. Topologically, residues 247 to 262 (LTFLIDPARFRYPERP) are cytoplasmic. A helical membrane pass occupies residues 263–283 (IIFLSMCYCVYSVGYLIRLFA). Residues 284-311 (GAESIACDRDSGQLYVIQEGLESTGCTL) lie on the Extracellular side of the membrane. Residues 312–332 (VFLVLYYFGMASSLWWVVLTL) form a helical membrane-spanning segment. Residues 333–351 (TWFLAAGKKWGHEAIEANS) lie on the Cytoplasmic side of the membrane. The chain crosses the membrane as a helical span at residues 352 to 372 (SYFHLAAWAIPAVKTILILVM). Residues 373-393 (RRVAGDELTGVCYVGSMDVNA) are Extracellular-facing. Residues 394–414 (LTGFVLIPLACYLVIGTSFIL) form a helical membrane-spanning segment. Topologically, residues 415–443 (SGFVALFHIRRVMKTGGENTDKLEKLMVR) are cytoplasmic. The chain crosses the membrane as a helical span at residues 444–464 (IGLFSVLYTVPATCVIACYFY). The Extracellular portion of the chain corresponds to 465-502 (ERLNMDYWKILAAQHKCKMNNQTKTLDCLMAASIPAVE). Asn-485 carries an N-linked (GlcNAc...) asparagine glycan. Residues 503–523 (IFMVKIFMLLVVGITSGMWIW) traverse the membrane as a helical segment. Residues 524-581 (TSKTLQSWQQVCSRRLKKKSRRKPASVITSGGIYKKAQHPQKTHHGKYEIPAQSPTCV) lie on the Cytoplasmic side of the membrane. A Lys-Thr-X-X-X-Trp motif, mediates interaction with the PDZ domain of Dvl family members motif is present at residues 526–531 (KTLQSW). Residues 560–581 (AQHPQKTHHGKYEIPAQSPTCV) are disordered. A PDZ-binding motif is present at residues 579-581 (TCV).

Belongs to the G-protein coupled receptor Fz/Smo family. As to quaternary structure, interacts with WNT7B. Interacts with MYOC. Post-translationally, ubiquitinated by ZNRF3, leading to its degradation by the proteasome. As to expression, highest levels in the placenta and fetal kidney, followed by fetal lung and brain. In adult brain, abundantly expressed in the cerebellum, followed by cerebral cortex, medulla and spinal cord; very low levels in total brain, frontal lobe, temporal lobe and putamen. Weak expression detected in adult brain, heart, lung, skeletal muscle, pancreas, spleen and prostate.

Its subcellular location is the cell membrane. In terms of biological role, receptor for Wnt proteins. Functions in the canonical Wnt/beta-catenin signaling pathway. The canonical Wnt/beta-catenin signaling pathway leads to the activation of disheveled proteins, inhibition of GSK-3 kinase, nuclear accumulation of beta-catenin and activation of Wnt target genes. A second signaling pathway involving PKC and calcium fluxes has been seen for some family members, but it is not yet clear if it represents a distinct pathway or if it can be integrated in the canonical pathway, as PKC seems to be required for Wnt-mediated inactivation of GSK-3 kinase. Both pathways seem to involve interactions with G-proteins. May be involved in transduction and intercellular transmission of polarity information during tissue morphogenesis and/or in differentiated tissues. This Homo sapiens (Human) protein is Frizzled-10 (FZD10).